A 300-amino-acid chain; its full sequence is Cation-efflux pump FieF (300 aa).

A helical membrane pass occupies residues 24-44 (LLIKIFAWWYTGSVSILAALV). Positions 45 and 49 each coordinate Zn(2+). 2 consecutive transmembrane segments (helical) span residues 82 to 102 (AALAQSMFISGSALFLFLTGI) and 114 to 134 (AGVGVVVTLIALVSTLALVTF). Positions 153 and 157 each coordinate Zn(2+). The next 2 membrane-spanning stretches (helical) occupy residues 156-176 (SDVMMNGAILVALGLSWYGWH) and 178-198 (ADALFALGIGIYILYSALRMG).

The protein belongs to the cation diffusion facilitator (CDF) transporter (TC 2.A.4) family. FieF subfamily. As to quaternary structure, homodimer.

It localises to the cell inner membrane. It carries out the reaction Zn(2+)(in) + H(+)(out) = Zn(2+)(out) + H(+)(in). It catalyses the reaction Cd(2+)(in) + H(+)(out) = Cd(2+)(out) + H(+)(in). The enzyme catalyses Fe(2+)(in) + H(+)(out) = Fe(2+)(out) + H(+)(in). Its function is as follows. Divalent metal cation transporter which exports Zn(2+), Cd(2+) and possibly Fe(2+). May be involved in zinc and iron detoxification by efflux. The protein is Cation-efflux pump FieF of Klebsiella pneumoniae subsp. pneumoniae (strain ATCC 700721 / MGH 78578).